We begin with the raw amino-acid sequence, 343 residues long: Palmitoyltransferase ZDHHC4 (343 aa).

The Lumenal segment spans residues 1–2 (MD). A helical transmembrane segment spans residues 3-23 (FLVLFLFYLAFLLICVVLICI). The Cytoplasmic portion of the chain corresponds to 24–67 (FTKSQRLKAVVLGGAQVCSRVIPQCLQRAVQTLLHQLFHTRHPT). The helical transmembrane segment at 68–88 (FIVLHLLLQGLVYAEYTCEVF) threads the bilayer. At 89-100 (GYCRELEFSLPY) the chain is on the lumenal side. Residues 101–121 (LLLPYVLLSVNLVFFTLTCAA) form a helical membrane-spanning segment. At 122–193 (NPGTITKANE…NCIGAWNTRY (72 aa)) the chain is on the cytoplasmic side. The DHHC domain occupies 149–199 (SRCPTCDLRKPARSKHCRLCDRCVHRFDHHCVWVNNCIGAWNTRYFLIYLL). Catalysis depends on Cys179, which acts as the S-palmitoyl cysteine intermediate. A helical transmembrane segment spans residues 194–214 (FLIYLLTLTASAATIATVTAA). The Lumenal portion of the chain corresponds to 215–255 (FLLRLVTVSDLYQETYLDDVGHFQAVDTVFLIQHLFLAFPR). A helical transmembrane segment spans residues 256–276 (IVFLLGFVIVLSMLLAGYLCF). Residues 277-343 (ALYLAATNQT…ATPSYKKKEK (67 aa)) are Cytoplasmic-facing. A Di-lysine motif motif is present at residues 340–343 (KKEK).

It belongs to the DHHC palmitoyltransferase family. As to quaternary structure, interacts with CPT1A.

It is found in the endoplasmic reticulum membrane. It localises to the golgi apparatus membrane. The protein localises to the cell membrane. The enzyme catalyses L-cysteinyl-[protein] + hexadecanoyl-CoA = S-hexadecanoyl-L-cysteinyl-[protein] + CoA. In terms of biological role, palmitoyltransferase that could catalyze the addition of palmitate onto protein substrates including the D(2) dopamine receptor DRD2, GSK3B or MAVS. Mediates GSK3B palmitoylation to prevent its AKT1-mediated phosphorylation leading to activation of the STAT3 signaling pathway. Also catalyzes MAVS palmitoylation which promotes its stabilization and activation by inhibiting 'Lys-48'- but facilitating 'Lys-63'-linked ubiquitination. The sequence is that of Palmitoyltransferase ZDHHC4 from Mus musculus (Mouse).